The primary structure comprises 345 residues: Protein RecA (345 aa).

65–72 serves as a coordination point for ATP; that stretch reads GPESSGKT.

This sequence belongs to the RecA family.

It is found in the cytoplasm. Its function is as follows. Can catalyze the hydrolysis of ATP in the presence of single-stranded DNA, the ATP-dependent uptake of single-stranded DNA by duplex DNA, and the ATP-dependent hybridization of homologous single-stranded DNAs. It interacts with LexA causing its activation and leading to its autocatalytic cleavage. This Campylobacter fetus subsp. fetus (strain 82-40) protein is Protein RecA.